The chain runs to 108 residues: uncharacterized protein (108 aa).

A Phosphothreonine modification is found at threonine 56. Positions 89 to 108 (AQAKGTEQAEALKKGTSKWF) are disordered.

Its subcellular location is the cytoplasm. This is an uncharacterized protein from Schizosaccharomyces pombe (strain 972 / ATCC 24843) (Fission yeast).